A 347-amino-acid polypeptide reads, in one-letter code: F-box/kelch-repeat protein At5g03020 (347 aa).

A disordered region spans residues 1–21; that stretch reads MTEEMSKESPPPPPTSFSSLP. One can recognise an F-box domain in the interval 14-62; that stretch reads PTSFSSLPDDVALDCRARISRFHYPTLSLVSKGFRTLIASPELEATRSF. Kelch repeat units follow at residues 119-165 and 167-215; these read QIYI…VIDG and IYVI…KKKH.

This Arabidopsis thaliana (Mouse-ear cress) protein is F-box/kelch-repeat protein At5g03020.